The chain runs to 138 residues: Phosphoribosyl-AMP cyclohydrolase (138 aa).

D84 contributes to the Mg(2+) binding site. C85 serves as a coordination point for Zn(2+). Mg(2+)-binding residues include D86 and D88. Residues C102 and C109 each coordinate Zn(2+).

Belongs to the PRA-CH family. As to quaternary structure, homodimer. Mg(2+) is required as a cofactor. It depends on Zn(2+) as a cofactor.

The protein resides in the cytoplasm. The catalysed reaction is 1-(5-phospho-beta-D-ribosyl)-5'-AMP + H2O = 1-(5-phospho-beta-D-ribosyl)-5-[(5-phospho-beta-D-ribosylamino)methylideneamino]imidazole-4-carboxamide. Its pathway is amino-acid biosynthesis; L-histidine biosynthesis; L-histidine from 5-phospho-alpha-D-ribose 1-diphosphate: step 3/9. Functionally, catalyzes the hydrolysis of the adenine ring of phosphoribosyl-AMP. This chain is Phosphoribosyl-AMP cyclohydrolase, found in Burkholderia ambifaria (strain ATCC BAA-244 / DSM 16087 / CCUG 44356 / LMG 19182 / AMMD) (Burkholderia cepacia (strain AMMD)).